A 194-amino-acid chain; its full sequence is WASH complex subunit 3 (194 aa).

M1 carries the post-translational modification N-acetylmethionine. Residues 46 to 74 are a coiled coil; that stretch reads AVCEEKLADLSLRIQQIETTLNILDAKLS. Disordered stretches follow at residues 94 to 126 and 158 to 194; these read VTNG…PSEN and SEGL…SFSD. The span at 98 to 113 shows a compositional bias: low complexity; sequence SHSETTSEQTQQNSTQ. The span at 114 to 126 shows a compositional bias: polar residues; the sequence is DSGAQESEAPSEN.

It belongs to the CCDC53 family. In terms of assembly, component of the WASH core complex also described as WASH regulatory complex (SHRC) composed of WASHC1, WASHC2, WASHC3, WASHC4 and WASHC5. The WASH core complex associates via WASHC2 with the F-actin-capping protein dimer (formed by CAPZA1, CAPZA2 or CAPZA3 and CAPZB) in a transient or substoichiometric manner which was initially described as WASH complex.

It is found in the early endosome. Functionally, acts as a component of the WASH core complex that functions as a nucleation-promoting factor (NPF) at the surface of endosomes, where it recruits and activates the Arp2/3 complex to induce actin polymerization, playing a key role in the fission of tubules that serve as transport intermediates during endosome sortingg. The chain is WASH complex subunit 3 from Mus musculus (Mouse).